The primary structure comprises 644 residues: Threonine--tRNA ligase (644 aa).

The TGS domain maps to 1 to 61 (MVAITLPDGN…TQDASVEIVT (61 aa)). The catalytic stretch occupies residues 242–533 (DHRKIGKALN…LIEHYAGWMP (292 aa)). Positions 333, 384, and 510 each coordinate Zn(2+).

Belongs to the class-II aminoacyl-tRNA synthetase family. Homodimer. Zn(2+) is required as a cofactor.

Its subcellular location is the cytoplasm. It carries out the reaction tRNA(Thr) + L-threonine + ATP = L-threonyl-tRNA(Thr) + AMP + diphosphate + H(+). Its function is as follows. Catalyzes the attachment of threonine to tRNA(Thr) in a two-step reaction: L-threonine is first activated by ATP to form Thr-AMP and then transferred to the acceptor end of tRNA(Thr). Also edits incorrectly charged L-seryl-tRNA(Thr). This chain is Threonine--tRNA ligase, found in Psychrobacter sp. (strain PRwf-1).